Reading from the N-terminus, the 371-residue chain is Cysteine proteinase 1 (371 aa).

Positions 1–18 are cleaved as a signal peptide; it reads MAHRVLLLLSLASAAAVA. The propeptide at 19–136 is activation peptide; it reads AAVDAEDPLI…HEAPVLPTDG (118 aa). 2 cysteine pairs are disulfide-bonded: C158–C208 and C192–C241. The active site involves C161. An N-linked (GlcNAc...) asparagine glycan is attached at N254. C297 and C354 form a disulfide bridge. Catalysis depends on residues H303 and N330.

The protein belongs to the peptidase C1 family. In terms of tissue distribution, expressed during the late stages of seed ripening, in mature seeds and during germination.

In terms of biological role, involved in the degradation of the storage protein zein. May play a role in proteolysis during emergencies. The protein is Cysteine proteinase 1 (CCP1) of Zea mays (Maize).